A 415-amino-acid polypeptide reads, in one-letter code: Transcription factor gsfR2 (415 aa).

The zn(2)-C6 fungal-type DNA-binding region spans 9–36 (CITCVQSKRKCDQGLPKCQRCLAKNIHC). The segment at 65–91 (AEEPSRGCQLQRSPARPTSPTHSPHAN) is disordered. The segment covering 72–88 (CQLQRSPARPTSPTHSP) has biased composition (polar residues).

The protein localises to the nucleus. Functionally, transcription factor that regulates expression of the gene cluster that mediates the biosynthesis of Griseofulvin, an important antifungal drug that has been in use for a long time for treating dermatophyte infections. This is Transcription factor gsfR2 from Penicillium aethiopicum.